Consider the following 1553-residue polypeptide: Pre-mRNA cleavage complex 2 protein Pcf11 (1553 aa).

S2 bears the N-acetylserine mark. One can recognise a CID domain in the interval 14-142 (AREDACRDYQ…ALDVRVNSLD (129 aa)). The residue at position 120 (S120) is a Phosphoserine. Residue T121 is modified to Phosphothreonine. The tract at residues 167-186 (NKSPDEPSTPGTVVSSPSIS) is disordered. Phosphoserine is present on residues S169 and S182. Low complexity predominate over residues 174–186 (STPGTVVSSPSIS). Residues 208-235 (LLAKQKQLLELQQKKLELELEQAKAQLA) adopt a coiled-coil conformation. The disordered stretch occupies residues 265 to 648 (AVKTPHQVPV…KQQHRLSVDA (384 aa)). K291 is covalently cross-linked (Glycyl lysine isopeptide (Lys-Gly) (interchain with G-Cter in SUMO2)). The segment covering 308–318 (HGKEQSHRKEF) has biased composition (basic and acidic residues). Polar residues predominate over residues 321–342 (NTINQSDIKTSKNVPSEKLNSS). K329 participates in a covalent cross-link: Glycyl lysine isopeptide (Lys-Gly) (interchain with G-Cter in SUMO2). Basic and acidic residues-rich tracts occupy residues 343-365 (KQEK…DSKS), 381-422 (HTKD…DVKE), and 428-443 (EKKE…EHRV). K457 participates in a covalent cross-link: Glycyl lysine isopeptide (Lys-Gly) (interchain with G-Cter in SUMO2). Residues 476 to 487 (STRKRSRSRSPK) are compositionally biased toward basic residues. Phosphoserine occurs at positions 490, 495, 510, and 512. The span at 495–509 (SPKRRDRRSPKRRQR) shows a compositional bias: basic residues. 2 stretches are compositionally biased toward basic and acidic residues: residues 530–568 (SHME…DRPQ) and 600–616 (SGWE…EHSK). Residue S645 is modified to Phosphoserine. K654 participates in a covalent cross-link: Glycyl lysine isopeptide (Lys-Gly) (interchain with G-Cter in SUMO2). S705 carries the phosphoserine modification. Residues 707-733 (FNDRFPLKRPRYEDSDKPFVDGPASRF) form a disordered region. A compositionally biased stretch (basic and acidic residues) spans 716-725 (PRYEDSDKPF). K723 is covalently cross-linked (Glycyl lysine isopeptide (Lys-Gly) (interchain with G-Cter in SUMO2)). S777 is subject to Phosphoserine. T785 carries the phosphothreonine modification. Phosphoserine is present on S794. Asymmetric dimethylarginine occurs at positions 805, 820, and 833. A Phosphoserine modification is found at S851. Residues 921 to 940 (HGPSGAAIRFDGPHGQPGGG) form a disordered region. An asymmetric dimethylarginine mark is found at R929, R944, R957, R982, R995, R1008, R1092, and R1103. Residue K1276 forms a Glycyl lysine isopeptide (Lys-Gly) (interchain with G-Cter in SUMO2) linkage. The disordered stretch occupies residues 1286-1313 (DSATAQVTEAVAQPPPEEDEDQNEDQDV). A compositionally biased stretch (acidic residues) spans 1301 to 1313 (PEEDEDQNEDQDV). Glycyl lysine isopeptide (Lys-Gly) (interchain with G-Cter in SUMO2) cross-links involve residues K1417, K1509, K1522, and K1544. The disordered stretch occupies residues 1516-1553 (CESPKVKEEQIDAPPACSEESVATPTEIKTESDTVESV).

In terms of assembly, associates with the phosphorylated CTD domain of POLR2A /RNA polymerase II. In terms of processing, phosphorylation at Ser-120 and/or Thr-121 by WNK1 weakens its association with POLR2A/RNA polymerase II, promoting transcript release from the chromatin template and mRNA export to the cytoplasm.

Its subcellular location is the nucleus. Its function is as follows. Component of pre-mRNA cleavage complex II, which promotes transcription termination by RNA polymerase II. This chain is Pre-mRNA cleavage complex 2 protein Pcf11, found in Mus musculus (Mouse).